The chain runs to 216 residues: Large ribosomal subunit protein uL1 (216 aa).

This sequence belongs to the universal ribosomal protein uL1 family. Component of the large ribosomal subunit.

The protein resides in the cytoplasm. In terms of biological role, component of the large ribosomal subunit. The ribosome is a large ribonucleoprotein complex responsible for the synthesis of proteins in the cell. The sequence is that of Large ribosomal subunit protein uL1 (rpl10a) from Ictalurus punctatus (Channel catfish).